We begin with the raw amino-acid sequence, 417 residues long: Citrate synthase-related protein DDB_G0287281 (417 aa).

The segment at 284–317 (NKNNNNNNNNNNNNNNNNNNNNNNNNSEDDDDDN) is disordered. Residues 286-309 (NNNNNNNNNNNNNNNNNNNNNNNN) show a composition bias toward low complexity.

It belongs to the citrate synthase family.

The sequence is that of Citrate synthase-related protein DDB_G0287281 from Dictyostelium discoideum (Social amoeba).